The following is a 427-amino-acid chain: Acyl-CoA hydrolase 2 (427 aa).

15–83 is a binding site for a nucleoside 3',5'-cyclic phosphate; that stretch reads LLQKLPSSSL…FLLKQYDYFG (69 aa). Catalysis depends on charge relay system residues Asp337, Ser359, and Gln409. Positions 425–427 match the Microbody targeting signal motif; sequence SKL.

Belongs to the C/M/P thioester hydrolase family. In terms of assembly, homotetramer. Mostly expressed in leaves and flowers, and, to a lower extent, in seedlings and siliques.

The protein localises to the peroxisome matrix. It catalyses the reaction a fatty acyl-CoA + H2O = a fatty acid + CoA + H(+). The enzyme catalyses dodecanoyl-CoA + H2O = dodecanoate + CoA + H(+). The catalysed reaction is tetradecanoyl-CoA + H2O = tetradecanoate + CoA + H(+). It carries out the reaction octadecanoyl-CoA + H2O = octadecanoate + CoA + H(+). It catalyses the reaction (9Z)-hexadecenoyl-CoA + H2O = (9Z)-hexadecenoate + CoA + H(+). The enzyme catalyses (5Z,8Z,11Z,14Z)-eicosatetraenoyl-CoA + H2O = (5Z,8Z,11Z,14Z)-eicosatetraenoate + CoA + H(+). The catalysed reaction is hexadecanoyl-CoA + H2O = hexadecanoate + CoA + H(+). It carries out the reaction (9Z)-octadecenoyl-CoA + H2O = (9Z)-octadecenoate + CoA + H(+). It catalyses the reaction (9Z,12Z)-octadecadienoyl-CoA + H2O = (9Z,12Z)-octadecadienoate + CoA + H(+). It functions in the pathway lipid metabolism; fatty acid metabolism. With respect to regulation, insensitive to feedback inhibition by free coenzyme A (CoASH). Catalyzes the hydrolysis of acyl-CoAs into free fatty acids and coenzyme A (CoASH), regulating their respective intracellular levels. Active with both medium chain and long chain acyl-CoAs (e.g. 12:0-CoA, 14:0-CoA, 16:0-CoA, 18:0-CoA, 16:1-CoA, 18:1-CoA, 18:2-CoA and 20:4-CoA) as substrates, palmitoleoyl-CoA (16:1-CoA) being the favorite substrate. The sequence is that of Acyl-CoA hydrolase 2 from Arabidopsis thaliana (Mouse-ear cress).